We begin with the raw amino-acid sequence, 314 residues long: Ribosomal RNA small subunit methyltransferase H (314 aa).

Residues Gly-37 to His-39, Asp-57, Phe-84, Asp-105, and Gln-112 contribute to the S-adenosyl-L-methionine site.

Belongs to the methyltransferase superfamily. RsmH family.

Its subcellular location is the cytoplasm. The enzyme catalyses cytidine(1402) in 16S rRNA + S-adenosyl-L-methionine = N(4)-methylcytidine(1402) in 16S rRNA + S-adenosyl-L-homocysteine + H(+). Functionally, specifically methylates the N4 position of cytidine in position 1402 (C1402) of 16S rRNA. The chain is Ribosomal RNA small subunit methyltransferase H from Fusobacterium nucleatum subsp. nucleatum (strain ATCC 25586 / DSM 15643 / BCRC 10681 / CIP 101130 / JCM 8532 / KCTC 2640 / LMG 13131 / VPI 4355).